Here is a 61-residue protein sequence, read N- to C-terminus: Large ribosomal subunit protein uL30 (61 aa).

Belongs to the universal ribosomal protein uL30 family. In terms of assembly, part of the 50S ribosomal subunit.

This is Large ribosomal subunit protein uL30 from Chromobacterium violaceum (strain ATCC 12472 / DSM 30191 / JCM 1249 / CCUG 213 / NBRC 12614 / NCIMB 9131 / NCTC 9757 / MK).